We begin with the raw amino-acid sequence, 877 residues long: ABC transporter A family member 1 (877 aa).

The next 7 helical transmembrane spans lie at 46-66, 268-288, 324-344, 347-367, 379-399, 420-440, and 479-499; these read YFST…LFLI, VWGG…LLYK, ILIS…FFLG, FFVL…VAFF, IGIG…FSGM, IILF…IGNV, and LLAL…IIPG. Positions 552 to 788 constitute an ABC transporter domain; that stretch reads LIICGLSKSY…YGEGYSVNIV (237 aa). 591–598 contributes to the ATP binding site; sequence GSNGCGKS.

It belongs to the ABC transporter superfamily. ABCA family.

It localises to the membrane. This is ABC transporter A family member 1 (abcA1) from Dictyostelium discoideum (Social amoeba).